We begin with the raw amino-acid sequence, 89 residues long: uncharacterized protein (89 aa).

This is an uncharacterized protein from Methanocaldococcus jannaschii (strain ATCC 43067 / DSM 2661 / JAL-1 / JCM 10045 / NBRC 100440) (Methanococcus jannaschii).